Here is a 148-residue protein sequence, read N- to C-terminus: Protein RESISTANCE TO POWDERY MILDEW 8.1 (148 aa).

One can recognise an RPW8 domain in the interval 1–148; the sequence is MPIGELAIGA…VISACSKIRA (148 aa). Residues 7-23 form a helical membrane-spanning segment; the sequence is AIGAVLGVGAQAIYDRF. Residues 120–140 are a coiled coil; it reads DDIKEIKAKISEMDTKLAEVI.

The protein belongs to the plant RPW8 protein family.

The protein resides in the membrane. Its function is as follows. Disease resistance (R) protein that induces localized, salicylic acid-dependent defenses. Confers resistance to powdery mildew (e.g. Erysiphe cichoracearum UCSC1). This chain is Protein RESISTANCE TO POWDERY MILDEW 8.1, found in Arabidopsis thaliana (Mouse-ear cress).